Reading from the N-terminus, the 157-residue chain is Protein Smg homolog (157 aa).

This sequence belongs to the Smg family.

This Aeromonas salmonicida (strain A449) protein is Protein Smg homolog.